We begin with the raw amino-acid sequence, 397 residues long: Acetate kinase (397 aa).

A Mg(2+)-binding site is contributed by N8. K15 is an ATP binding site. R89 provides a ligand contact to substrate. D146 acts as the Proton donor/acceptor in catalysis. Residues 206-210, 283-285, and 331-335 each bind ATP; these read HVGNG, DMR, and GMGEN. E383 is a binding site for Mg(2+).

This sequence belongs to the acetokinase family. As to quaternary structure, homodimer. Requires Mg(2+) as cofactor. Mn(2+) serves as cofactor.

It localises to the cytoplasm. It carries out the reaction acetate + ATP = acetyl phosphate + ADP. It functions in the pathway metabolic intermediate biosynthesis; acetyl-CoA biosynthesis; acetyl-CoA from acetate: step 1/2. In terms of biological role, catalyzes the formation of acetyl phosphate from acetate and ATP. Can also catalyze the reverse reaction. This is Acetate kinase from Streptococcus agalactiae serotype Ia (strain ATCC 27591 / A909 / CDC SS700).